The primary structure comprises 550 residues: Proteasome-associated ATPase (550 aa).

A coiled-coil region spans residues 9–48 (EELARRVASLSAQNERLAQILVEARSKIVGLQQQIDDLAQ). An ATP-binding site is contributed by 233–238 (GCGKTL). Residues 528–550 (KGEGKNPTPAKAIETPHNTGPYL) are disordered. A docks into pockets in the proteasome alpha-ring region spans residues 549–550 (YL).

The protein belongs to the AAA ATPase family. In terms of assembly, homohexamer. Assembles into a hexameric ring structure that caps the 20S proteasome core. Strongly interacts with the prokaryotic ubiquitin-like protein Pup through a hydrophobic interface; the interacting region of ARC lies in its N-terminal coiled-coil domain. There is one Pup binding site per ARC hexamer ring. Upon ATP-binding, the C-terminus of ARC interacts with the alpha-rings of the proteasome core, possibly by binding to the intersubunit pockets.

It functions in the pathway protein degradation; proteasomal Pup-dependent pathway. Its function is as follows. ATPase which is responsible for recognizing, binding, unfolding and translocation of pupylated proteins into the bacterial 20S proteasome core particle. May be essential for opening the gate of the 20S proteasome via an interaction with its C-terminus, thereby allowing substrate entry and access to the site of proteolysis. Thus, the C-termini of the proteasomal ATPase may function like a 'key in a lock' to induce gate opening and therefore regulate proteolysis. This Jonesia denitrificans (strain ATCC 14870 / DSM 20603 / BCRC 15368 / CIP 55.134 / JCM 11481 / NBRC 15587 / NCTC 10816 / Prevot 55134) (Listeria denitrificans) protein is Proteasome-associated ATPase.